The primary structure comprises 299 residues: Small ribosomal subunit biogenesis GTPase RsgA (299 aa).

The region spanning 73 to 232 (CSWLTRPQVA…VADTPGFNRP (160 aa)) is the CP-type G domain. GTP-binding positions include 122-125 (TKGD) and 174-182 (GPSGVGKSS). The Zn(2+) site is built by C257, C262, H264, and C270.

It belongs to the TRAFAC class YlqF/YawG GTPase family. RsgA subfamily. As to quaternary structure, monomer. Associates with 30S ribosomal subunit, binds 16S rRNA. The cofactor is Zn(2+).

The protein resides in the cytoplasm. Its function is as follows. One of several proteins that assist in the late maturation steps of the functional core of the 30S ribosomal subunit. Helps release RbfA from mature subunits. May play a role in the assembly of ribosomal proteins into the subunit. Circularly permuted GTPase that catalyzes slow GTP hydrolysis, GTPase activity is stimulated by the 30S ribosomal subunit. This is Small ribosomal subunit biogenesis GTPase RsgA from Parasynechococcus marenigrum (strain WH8102).